Reading from the N-terminus, the 313-residue chain is T-box protein 37 (313 aa).

The T-box DNA-binding region spans 19 to 195; the sequence is IWEKFYPKTE…HNKFASGFRS (177 aa). Residues 193–228 are disordered; the sequence is FRSNGKRRLSSESENSENSPPKRSASAISSLTPPAI.

The protein resides in the nucleus. In terms of biological role, transcription factor. Required for mesodermal induction, acting redundantly with transcription factor tbx-38. Together with tbx-38, acts by inducing cell fates in the AB lineage, thereby playing a role in development of the anterior pharynx. The polypeptide is T-box protein 37 (tbx-37) (Caenorhabditis elegans).